The sequence spans 639 residues: MRMTTGQALVKFLDNQYVSFDGKEEKFVDGIFTIFGHGIVVGLGEALYENPGELKVYQGRNEQGMAHVSTAFAKQNNRRKIIACSSSVGPGAANMVTAAATATVNNIPLLLLPGDSFATRQPDPVLQQIEQSYNLGITTNDAFKPVCKYWDRINRPEQLMSAMINAMRVLTDPAETGAVCIALPQDVQGEAYDFPEYFFKKRVHRITRPLAVQEEFEEALDIIMNKKKPIIICGGGVRYSEAGEALVDFAEEFNIPICETQAGKSAIKSSHPLNLGGIGVTGNLAANMIAKDADLVIGVGTRFSDFTTSSKSLFKNPEVDFITVNVSKFHGEKMDAHKIIGDAKVCIEELQAMLEANNYESSYEDEIVNAKKAWKEEMKRLTNIKYDENFEALIKPKREGCIEEFSVLTGGLITQTAALGVIRETIDDDAIVVGAAGSLPGDLQRMWETDVRDSYHMEYGYSCMGYEIAATLGAKLAEPEREVYSMVGDGSYLMLHSEMVTAMQEQKKINILLFDNCGFGCINNLQMSNGIGSLATEFRYRDENGKLEGGLIPIDFAKVASGYGLKTYSVKTLAQLKEALEDAKKQKVSTLIDIKVLPKTMTDGYDAWWHVGIAGESKIDGVNKAFENKEKNLKAARRY.

Residue Glu62 coordinates thiamine diphosphate. Residues 438–518 (SLPGDLQRMW…INILLFDNCG (81 aa)) are thiamine pyrophosphate binding. Mg(2+)-binding residues include Asp489 and Asn516.

This sequence belongs to the TPP enzyme family. The cofactor is Mg(2+). Thiamine diphosphate serves as cofactor.

The catalysed reaction is 3D-3,5/4-trihydroxycyclohexane-1,2-dione + H2O = 5-deoxy-D-glucuronate + H(+). The protein operates within polyol metabolism; myo-inositol degradation into acetyl-CoA; acetyl-CoA from myo-inositol: step 3/7. Its function is as follows. Involved in the cleavage of the C1-C2 bond of 3D-(3,5/4)-trihydroxycyclohexane-1,2-dione (THcHDO) to yield 5-deoxy-glucuronate (5DG). This is 3D-(3,5/4)-trihydroxycyclohexane-1,2-dione hydrolase from Clostridium perfringens (strain ATCC 13124 / DSM 756 / JCM 1290 / NCIMB 6125 / NCTC 8237 / Type A).